Reading from the N-terminus, the 505-residue chain is Activin receptor type-1B (505 aa).

An N-terminal signal peptide occupies residues 1-23 (MAESAGASSFFPLVVLLLAGSGG). Residues 24–126 (SGPRGIQALL…AHPSMWGPVE (103 aa)) are Extracellular-facing. Asparagine 43 carries N-linked (GlcNAc...) asparagine glycosylation. Residues 127-149 (LVGIIAGPVFLLFLIIIIVFLVI) form a helical membrane-spanning segment. Residues 150 to 505 (NYHQRVYHNR…QLSVQEDVKI (356 aa)) lie on the Cytoplasmic side of the membrane. Residues 177 to 206 (KTLQDLVYDLSTSGSGSGLPLFVQRTVART) form the GS domain. Residues 207–497 (IVLQEIIGKG…LRIKKTLSQL (291 aa)) enclose the Protein kinase domain. Residues 213 to 221 (IGKGRFGEV) and lysine 234 contribute to the ATP site. Aspartate 335 serves as the catalytic Proton acceptor. At tyrosine 380 the chain carries Phosphotyrosine.

The protein belongs to the protein kinase superfamily. TKL Ser/Thr protein kinase family. TGFB receptor subfamily. Forms an activin receptor complex with activin receptor type-2 (ACVR2A or ACVR2B). Part of a complex consisting of MAGI2/ARIP1, ACVR2A, ACVR1B and SMAD3. Interacts with SMAD2 and SMAD3. Interacts with SMAD7. Interacts with FKBP1A. Interacts with IGSF1. Interacts with CRIPTO. Interacts with TDP2. Interacts with TSC22D1/TSC-22. In terms of processing, autophosphorylated. Phosphorylated by activin receptor type-2 (ACVR2A or ACVR2B) in response to activin-binding at serine and threonine residues in the GS domain. Phosphorylation of ACVR1B by activin receptor type-2 regulates association with SMAD7. Post-translationally, ubiquitinated. Level of ubiquitination is regulated by the SMAD7-SMURF1 complex. Ubiquitinated.

Its subcellular location is the cell membrane. It carries out the reaction L-threonyl-[receptor-protein] + ATP = O-phospho-L-threonyl-[receptor-protein] + ADP + H(+). The enzyme catalyses L-seryl-[receptor-protein] + ATP = O-phospho-L-seryl-[receptor-protein] + ADP + H(+). Activin receptor type-2 (ACVR2A or ACVR2B) activates the type-1 receptor through phosphorylation of its regulatory GS domain. Transmembrane serine/threonine kinase activin type-1 receptor forming an activin receptor complex with activin receptor type-2 (ACVR2A or ACVR2B). Transduces the activin signal from the cell surface to the cytoplasm and is thus regulating a many physiological and pathological processes including neuronal differentiation and neuronal survival, hair follicle development and cycling, FSH production by the pituitary gland, wound healing, extracellular matrix production, immunosuppression and carcinogenesis. Activin is also thought to have a paracrine or autocrine role in follicular development in the ovary. Within the receptor complex, type-2 receptors (ACVR2A and/or ACVR2B) act as a primary activin receptors whereas the type-1 receptors like ACVR1B act as downstream transducers of activin signals. Activin binds to type-2 receptor at the plasma membrane and activates its serine-threonine kinase. The activated receptor type-2 then phosphorylates and activates the type-1 receptor such as ACVR1B. Once activated, the type-1 receptor binds and phosphorylates the SMAD proteins SMAD2 and SMAD3, on serine residues of the C-terminal tail. Soon after their association with the activin receptor and subsequent phosphorylation, SMAD2 and SMAD3 are released into the cytoplasm where they interact with the common partner SMAD4. This SMAD complex translocates into the nucleus where it mediates activin-induced transcription. Inhibitory SMAD7, which is recruited to ACVR1B through FKBP1A, can prevent the association of SMAD2 and SMAD3 with the activin receptor complex, thereby blocking the activin signal. Activin signal transduction is also antagonized by the binding to the receptor of inhibin-B via the IGSF1 inhibin coreceptor. ACVR1B also phosphorylates TDP2. The chain is Activin receptor type-1B (Acvr1b) from Mus musculus (Mouse).